The following is a 397-amino-acid chain: Serpin B10 (397 aa).

The Nuclear localization signal signature appears at 74–77; the sequence is KKRK.

The protein belongs to the serpin family. Ov-serpin subfamily.

The protein resides in the nucleus. The protein localises to the cytoplasm. In terms of biological role, protease inhibitor that may play a role in the regulation of protease activities during hematopoiesis and apoptosis induced by TNF. May regulate protease activities in the cytoplasm and in the nucleus. The sequence is that of Serpin B10 (SERPINB10) from Sorex araneus (Eurasian common shrew).